The primary structure comprises 249 residues: Uridylate kinase (249 aa).

21–24 (KLSG) is an ATP binding site. G63 provides a ligand contact to UMP. ATP is bound by residues G64 and R68. UMP contacts are provided by residues D84 and 145 to 152 (TGNPFVTT). ATP is bound by residues T172, Y178, and D181.

It belongs to the UMP kinase family. As to quaternary structure, homohexamer.

It localises to the cytoplasm. It carries out the reaction UMP + ATP = UDP + ADP. It participates in pyrimidine metabolism; CTP biosynthesis via de novo pathway; UDP from UMP (UMPK route): step 1/1. With respect to regulation, inhibited by UTP. In terms of biological role, catalyzes the reversible phosphorylation of UMP to UDP. The polypeptide is Uridylate kinase (Francisella tularensis subsp. holarctica (strain FTNF002-00 / FTA)).